The sequence spans 319 residues: ATP-dependent 6-phosphofructokinase (319 aa).

Gly-11 is a binding site for ATP. 21-25 (RAVTR) is a binding site for ADP. ATP is bound by residues 72–73 (RF) and 102–105 (GDGS). Asp-103 lines the Mg(2+) pocket. 125–127 (SID) serves as a coordination point for substrate. The Proton acceptor role is filled by Asp-127. Arg-154 lines the ADP pocket. Residues Arg-162 and 169–171 (MGR) each bind substrate. Residues 185-187 (GAD) and 213-215 (KKH) contribute to the ADP site. Substrate is bound by residues Glu-222, Arg-243, and 249–252 (HMQR).

This sequence belongs to the phosphofructokinase type A (PFKA) family. ATP-dependent PFK group I subfamily. Prokaryotic clade 'B1' sub-subfamily. In terms of assembly, homotetramer. It depends on Mg(2+) as a cofactor.

It localises to the cytoplasm. The catalysed reaction is beta-D-fructose 6-phosphate + ATP = beta-D-fructose 1,6-bisphosphate + ADP + H(+). It participates in carbohydrate degradation; glycolysis; D-glyceraldehyde 3-phosphate and glycerone phosphate from D-glucose: step 3/4. Allosterically activated by ADP and other diphosphonucleosides, and allosterically inhibited by phosphoenolpyruvate. Catalyzes the phosphorylation of D-fructose 6-phosphate to fructose 1,6-bisphosphate by ATP, the first committing step of glycolysis. The polypeptide is ATP-dependent 6-phosphofructokinase (Lactobacillus gasseri (strain ATCC 33323 / DSM 20243 / BCRC 14619 / CIP 102991 / JCM 1131 / KCTC 3163 / NCIMB 11718 / NCTC 13722 / AM63)).